Reading from the N-terminus, the 628-residue chain is Biosynthetic arginine decarboxylase (628 aa).

K99 carries the N6-(pyridoxal phosphate)lysine modification. A substrate-binding site is contributed by V279–Y289.

Belongs to the Orn/Lys/Arg decarboxylase class-II family. SpeA subfamily. Mg(2+) is required as a cofactor. Pyridoxal 5'-phosphate serves as cofactor.

The enzyme catalyses L-arginine + H(+) = agmatine + CO2. It participates in amine and polyamine biosynthesis; agmatine biosynthesis; agmatine from L-arginine: step 1/1. Functionally, catalyzes the biosynthesis of agmatine from arginine. The chain is Biosynthetic arginine decarboxylase from Xylella fastidiosa (strain M12).